We begin with the raw amino-acid sequence, 710 residues long: Lactoperoxidase (710 aa).

Positions 1–23 (MKVLLHLPALLASLTLLQTAASA) are cleaved as a signal peptide. Positions 24-80 (SDDPTAETDIIHDTVEEVKVWVNKAFLDSRDRLKMAMTTKIHSTRHLSDYLKHAKGR) are excised as a propeptide. C130 and C143 are joined by a disulfide. Position 223 (D223) interacts with heme b. H224 acts as the Proton acceptor in catalysis. Residue D225 coordinates Ca(2+). Cystine bridges form between C244–C254 and C248–C272. 4 residues coordinate Ca(2+): T299, F301, D303, and S305. S313 is modified (phosphoserine). A disulfide bond links C352 and C363. Heme b-binding residues include E373 and H466. Y480 carries the 3'-nitrotyrosine modification. 2 disulfide bridges follow: C571–C628 and C669–C694.

This sequence belongs to the peroxidase family. Ca(2+) is required as a cofactor. Heme b serves as cofactor. As to expression, expressed in the colon, including colonocytes and mucin-containing goblet cells. Not detected in the ileum.

The protein localises to the secreted. It is found in the cytoplasm. The enzyme catalyses 2 a phenolic donor + H2O2 = 2 a phenolic radical donor + 2 H2O. The catalysed reaction is thiocyanate + H2O2 + H(+) = hypothiocyanous acid + H2O. It catalyses the reaction iodide + H2O2 = hypoiodite + H2O. Heme-containing oxidoreductase which catalyzes the conversion of thiocyanate (SCN(-)) into antimicrobial agent hypothiocyanous acid (OSCN(-)) in the presence of hydrogen peroxide (H2O2). Also involved in the conversion of iodide (I(-)) into hypoiodite (IO(-)) in the presence of H2O2. Responsible for the inactivation of a wide range of micro-organisms and hence, important component of defense mechanism. May be implicated in airway host defense against infection. May contribute to maintaining an appropriate H2O2 cellular level, therefore protecting cells from H2O2-caused injuries and inflammation. The polypeptide is Lactoperoxidase (Mus musculus (Mouse)).